We begin with the raw amino-acid sequence, 1036 residues long: Isoleucine--tRNA ligase (1036 aa).

Positions 46–56 (PFATGLPHYGH) match the 'HIGH' region motif. The 'KMSKS' region motif lies at 589 to 593 (KMSKR). Lysine 592 contacts ATP.

Belongs to the class-I aminoacyl-tRNA synthetase family. IleS type 2 subfamily. Monomer. Zn(2+) is required as a cofactor.

It localises to the cytoplasm. The enzyme catalyses tRNA(Ile) + L-isoleucine + ATP = L-isoleucyl-tRNA(Ile) + AMP + diphosphate. Catalyzes the attachment of isoleucine to tRNA(Ile). As IleRS can inadvertently accommodate and process structurally similar amino acids such as valine, to avoid such errors it has two additional distinct tRNA(Ile)-dependent editing activities. One activity is designated as 'pretransfer' editing and involves the hydrolysis of activated Val-AMP. The other activity is designated 'posttransfer' editing and involves deacylation of mischarged Val-tRNA(Ile). In Chlamydia trachomatis serovar D (strain ATCC VR-885 / DSM 19411 / UW-3/Cx), this protein is Isoleucine--tRNA ligase.